The following is a 264-amino-acid chain: Tryptophan synthase alpha chain (264 aa).

Residues Glu49 and Asp60 each act as proton acceptor in the active site.

It belongs to the TrpA family. As to quaternary structure, tetramer of two alpha and two beta chains.

The enzyme catalyses (1S,2R)-1-C-(indol-3-yl)glycerol 3-phosphate + L-serine = D-glyceraldehyde 3-phosphate + L-tryptophan + H2O. It participates in amino-acid biosynthesis; L-tryptophan biosynthesis; L-tryptophan from chorismate: step 5/5. In terms of biological role, the alpha subunit is responsible for the aldol cleavage of indoleglycerol phosphate to indole and glyceraldehyde 3-phosphate. This Picosynechococcus sp. (strain ATCC 27264 / PCC 7002 / PR-6) (Agmenellum quadruplicatum) protein is Tryptophan synthase alpha chain.